Here is a 387-residue protein sequence, read N- to C-terminus: Proline-rich protein 5 (387 aa).

Interaction with RICTOR regions lie at residues 10–96 (MSSP…LTKG) and 189–219 (HESR…YGLY). The interval 13–34 (PSLSDLGKREPGAAGTDERGTQ) is disordered. Basic and acidic residues predominate over residues 18–33 (LGKREPGAAGTDERGT). A Phosphoserine modification is found at serine 253. Positions 262–387 (NPVAEHEAEG…EAPGGRPSVV (126 aa)) are disordered. Over residues 305–314 (SGTFRSSPTP) the composition is skewed to polar residues. Serine 373 carries the post-translational modification Phosphoserine.

It belongs to the PROTOR family. In terms of assembly, associated component of the mechanistic target of rapamycin complex 2 (mTORC2). Binds directly to MTOR and RICTOR within the TORC2 complex. In terms of tissue distribution, ubiquitously expressed. Expressed at high levels in kidney.

Associated subunit of mTORC2, which regulates cell growth and survival in response to hormonal signals. mTORC2 is activated by growth factors, but, in contrast to mTORC1, seems to be nutrient-insensitive. mTORC2 seems to function upstream of Rho GTPases to regulate the actin cytoskeleton, probably by activating one or more Rho-type guanine nucleotide exchange factors. PRR5 plays an important role in regulation of PDGFRB expression and in modulation of platelet-derived growth factor signaling. May act as a tumor suppressor in breast cancer. The protein is Proline-rich protein 5 of Mus musculus (Mouse).